The chain runs to 236 residues: Ubiquinone biosynthesis O-methyltransferase (236 aa).

S-adenosyl-L-methionine contacts are provided by arginine 36, glycine 56, aspartate 77, and methionine 125.

It belongs to the methyltransferase superfamily. UbiG/COQ3 family.

The catalysed reaction is a 3-demethylubiquinol + S-adenosyl-L-methionine = a ubiquinol + S-adenosyl-L-homocysteine + H(+). It carries out the reaction a 3-(all-trans-polyprenyl)benzene-1,2-diol + S-adenosyl-L-methionine = a 2-methoxy-6-(all-trans-polyprenyl)phenol + S-adenosyl-L-homocysteine + H(+). It functions in the pathway cofactor biosynthesis; ubiquinone biosynthesis. O-methyltransferase that catalyzes the 2 O-methylation steps in the ubiquinone biosynthetic pathway. This chain is Ubiquinone biosynthesis O-methyltransferase, found in Glaesserella parasuis serovar 5 (strain SH0165) (Haemophilus parasuis).